The primary structure comprises 202 residues: Thymidylate kinase (202 aa).

Residue 13 to 20 (GTDGAGKS) participates in ATP binding.

It belongs to the thymidylate kinase family.

It carries out the reaction dTMP + ATP = dTDP + ADP. Its function is as follows. Phosphorylation of dTMP to form dTDP in both de novo and salvage pathways of dTTP synthesis. This chain is Thymidylate kinase, found in Desulfotalea psychrophila (strain LSv54 / DSM 12343).